The primary structure comprises 306 residues: Glutaminase (306 aa).

Positions 66, 116, 159, 166, 190, 242, and 260 each coordinate substrate.

Belongs to the glutaminase family. Homotetramer.

The catalysed reaction is L-glutamine + H2O = L-glutamate + NH4(+). The polypeptide is Glutaminase (Caulobacter vibrioides (strain ATCC 19089 / CIP 103742 / CB 15) (Caulobacter crescentus)).